A 357-amino-acid polypeptide reads, in one-letter code: Spore wall and anchoring disk complex protein EnP1 (357 aa).

An N-terminal signal peptide occupies residues 1–16 (MKLLGFLIVGLSAISA). The N-linked (GlcNAc...) asparagine glycan is linked to asparagine 47. Positions 150-158 (ERRPHYKKI) match the HBM1 motif. Residues 329–334 (LKKVRG) carry the HBM2 motif.

The protein localises to the spore wall. It is found in the spore. It localises to the perispore. Functionally, spore wall protein involved in the adhesion to host cells surface glycoaminoglycans (GAGs). Microsporidian spore adherence is an integral part of activation and host cell invasion which requires the extrusion at the spore apex of a very long and coiled structure, the polar tube, through which the sporoplasm is pushed to enter into the potential host cell. This Encephalitozoon cuniculi (strain GB-M1) (Microsporidian parasite) protein is Spore wall and anchoring disk complex protein EnP1 (EnP1).